A 106-amino-acid polypeptide reads, in one-letter code: MKAKPSHQATSMSSSLRVSPSIHGYHFDTAARKKAVGNIFENIDQESLQRLFRNSGDKKAEERAKIIFAIDQDLEEKTRALMALKKRTKDKLLQFLKLRKYSIKVH.

Monomer. Interacts with NOTCH2 (via ANK repeats), the interaction inhibits the nuclear translocation of NOTCH2 N2ICD. Interacts (C-terminus) with CBY1 (C-terminus), TCIM competes with CTNNB1 for the interaction with CBY1. In terms of tissue distribution, expressed in liver, expression levels decrease in regenerating liver. In bone marrow, expressed in large progenitor-like cells, cells with ring-shaped nuclei and, at lower, levels in hematopietic stem cell-like cells with round nuclei (at protein level).

The protein localises to the cytoplasm. Its subcellular location is the nucleus. It localises to the nucleolus. The protein resides in the nucleus speckle. Functionally, seems to be involved in the regulation of cell growth an differentiation, may play different and opposite roles depending on the tissue or cell type. May enhance the WNT-CTNNB1 pathway by relieving antagonistic activity of CBY1. Enhances the proliferation of follicular dendritic cells. Plays a role in the mitogen-activated MAPK2/3 signaling pathway, positively regulates G1-to-S-phase transition of the cell cycle. In endothelial cells, enhances key inflammatory mediators and inflammatory response through the modulation of NF-kappaB transcriptional regulatory activity. Involved in the regulation of heat shock response, seems to play a positive feedback with HSF1 to modulate heat-shock downstream gene expression. Plays a role in the regulation of hematopoiesis even if the mechanisms are unknown. In cancers such as thyroid or lung cancer, it has been described as promoter of cell proliferation, G1-to-S-phase transition and inhibitor of apoptosis. However, it negatively regulates self-renewal of liver cancer cells via suppresion of NOTCH2 signaling. This Mus musculus (Mouse) protein is Transcriptional and immune response regulator.